We begin with the raw amino-acid sequence, 384 residues long: Sodium channel protein Nach (384 aa).

Over 1 to 319 (AAFAYFSGFM…LVSHLGSAFS (319 aa)) the chain is Extracellular. N-linked (GlcNAc...) asparagine glycans are attached at residues N32 and N215. A helical transmembrane segment spans residues 320 to 340 (LFVGMSMLSLVEIIYYFTVIL). Residues 341 to 384 (RRNYVQECRARQKLQTLHRRPNFGWPGDKNSNQQKSVFYIRGRN) are Cytoplasmic-facing.

Belongs to the amiloride-sensitive sodium channel (TC 1.A.6) family.

The protein resides in the membrane. Part of a complex that plays a role in tracheal liquid clearance. Probable role in sodium transport. The polypeptide is Sodium channel protein Nach (Nach) (Drosophila virilis (Fruit fly)).